Here is a 151-residue protein sequence, read N- to C-terminus: Putative pre-16S rRNA nuclease (151 aa).

This sequence belongs to the YqgF nuclease family.

The protein localises to the cytoplasm. Its function is as follows. Could be a nuclease involved in processing of the 5'-end of pre-16S rRNA. This chain is Putative pre-16S rRNA nuclease, found in Gloeothece citriformis (strain PCC 7424) (Cyanothece sp. (strain PCC 7424)).